A 480-amino-acid polypeptide reads, in one-letter code: Ribosomal protein uS12 methylthiotransferase RimO (480 aa).

The 111-residue stretch at 37 to 147 folds into the MTTase N-terminal domain; it reads NRIGFVSLGC…VLKHVHKYVP (111 aa). [4Fe-4S] cluster is bound by residues cysteine 46, cysteine 82, cysteine 111, cysteine 179, cysteine 183, and cysteine 186. The region spanning 165 to 402 is the Radical SAM core domain; sequence LTPKHYAYLK…MEVQAEISAE (238 aa). The TRAM domain occupies 405-471; the sequence is ARFVGRTMDI…EHDLWAELVD (67 aa).

The protein belongs to the methylthiotransferase family. RimO subfamily. It depends on [4Fe-4S] cluster as a cofactor.

It localises to the cytoplasm. It carries out the reaction L-aspartate(89)-[ribosomal protein uS12]-hydrogen + (sulfur carrier)-SH + AH2 + 2 S-adenosyl-L-methionine = 3-methylsulfanyl-L-aspartate(89)-[ribosomal protein uS12]-hydrogen + (sulfur carrier)-H + 5'-deoxyadenosine + L-methionine + A + S-adenosyl-L-homocysteine + 2 H(+). Functionally, catalyzes the methylthiolation of an aspartic acid residue of ribosomal protein uS12. This chain is Ribosomal protein uS12 methylthiotransferase RimO, found in Shewanella sp. (strain ANA-3).